Reading from the N-terminus, the 319-residue chain is Malate dehydrogenase (319 aa).

NAD(+)-binding positions include 10–15 (GSGNIG) and D34. 2 residues coordinate substrate: R83 and R89. Residues N96 and 119 to 121 (ITN) each bind NAD(+). Residues N121 and R152 each coordinate substrate. H176 serves as the catalytic Proton acceptor.

The protein belongs to the LDH/MDH superfamily. MDH type 3 family.

The catalysed reaction is (S)-malate + NAD(+) = oxaloacetate + NADH + H(+). Catalyzes the reversible oxidation of malate to oxaloacetate. The protein is Malate dehydrogenase of Paramagnetospirillum magneticum (strain ATCC 700264 / AMB-1) (Magnetospirillum magneticum).